Here is a 392-residue protein sequence, read N- to C-terminus: tRNA (guanine-N(7)-)-methyltransferase (392 aa).

Residues glutamate 123, glutamate 148, and aspartate 175 each contribute to the S-adenosyl-L-methionine site. Positions 201 and 231 each coordinate substrate.

The protein belongs to the class I-like SAM-binding methyltransferase superfamily. TrmB family.

The enzyme catalyses guanosine(46) in tRNA + S-adenosyl-L-methionine = N(7)-methylguanosine(46) in tRNA + S-adenosyl-L-homocysteine. The protein operates within tRNA modification; N(7)-methylguanine-tRNA biosynthesis. In terms of biological role, catalyzes the formation of N(7)-methylguanine at position 46 (m7G46) in tRNA. The chain is tRNA (guanine-N(7)-)-methyltransferase from Campylobacter jejuni subsp. jejuni serotype O:2 (strain ATCC 700819 / NCTC 11168).